A 203-amino-acid chain; its full sequence is bMERB domain-containing protein 1 (203 aa).

Residues 3 to 149 (LKQSLSVHLE…EQEEDKEMAD (147 aa)) form the bMERB domain. The segment at 161-184 (VTKTSASSRAEKKAEPPPSKPTVA) is disordered.

The protein is bMERB domain-containing protein 1 (Bmerb1) of Mus musculus (Mouse).